The following is a 124-amino-acid chain: MLVIFLGILGLLANQVLGLPTQAGGHLRSTDNPPEEELKYWCTYMESCKFCWECTHGLCKNKVNESMPTIIENSYLTSCEVSRWYNQCTYDEGNGHYHVMDCSDPVPHNRPHRLRMKIYKKEDL.

An N-terminal signal peptide occupies residues 1 to 28 (MLVIFLGILGLLANQVLGLPTQAGGHLR). N64 carries an N-linked (GlcNAc...) asparagine; by host glycan. Positions 121–124 (KEDL) match the Prevents secretion from ER motif.

The protein belongs to the asfivirus MGF 110 family.

The protein resides in the virion. It is found in the host endoplasmic reticulum-Golgi intermediate compartment. In terms of biological role, causes the redistribution of lumenal ER protein to an enlarged ERGIC compartment. The polypeptide is Protein MGF 110-4L (Ornithodoros (relapsing fever ticks)).